A 1413-amino-acid chain; its full sequence is DNA-directed RNA polymerase subunit beta' (1413 aa).

Zn(2+) contacts are provided by cysteine 70, cysteine 72, cysteine 85, and cysteine 88. Aspartate 460, aspartate 462, and aspartate 464 together coordinate Mg(2+). Cysteine 819, cysteine 893, cysteine 900, and cysteine 903 together coordinate Zn(2+).

This sequence belongs to the RNA polymerase beta' chain family. As to quaternary structure, the RNAP catalytic core consists of 2 alpha, 1 beta, 1 beta' and 1 omega subunit. When a sigma factor is associated with the core the holoenzyme is formed, which can initiate transcription. The cofactor is Mg(2+). Zn(2+) serves as cofactor.

It catalyses the reaction RNA(n) + a ribonucleoside 5'-triphosphate = RNA(n+1) + diphosphate. DNA-dependent RNA polymerase catalyzes the transcription of DNA into RNA using the four ribonucleoside triphosphates as substrates. This Burkholderia ambifaria (strain MC40-6) protein is DNA-directed RNA polymerase subunit beta'.